Consider the following 461-residue polypeptide: Nuclear distribution protein PAC1 (461 aa).

The 33-residue stretch at 9 to 41 folds into the LisH domain; it reads QAEELHKSIIAYLTANNLLNTANTLRAELNLSE. 7 WD repeats span residues 114–155, 157–197, 201–248, 251–290, 312–355, 357–396, and 401–457; these read SHRD…RTIK, HTRA…KNIR, GHDH…CVRT, GHTA…PESK, QYLS…LMTL, GHDN…KCIK, and AHER…MKLR.

The protein belongs to the WD repeat LIS1/nudF family. As to quaternary structure, self-associates. Interacts with NDL1 and dynein.

It is found in the cytoplasm. The protein localises to the cytoskeleton. Its subcellular location is the spindle pole. Its function is as follows. Positively regulates the activity of the minus-end directed microtubule motor protein dynein. May enhance dynein-mediated microtubule sliding by targeting dynein to the microtubule plus end. Required for nuclear migration during vegetative growth as well as development. Required for retrograde early endosome (EE) transport from the hyphal tip. Required for localization of dynein to the mitotic spindle poles. Recruits additional proteins to the dynein complex at SPBs. This is Nuclear distribution protein PAC1 from Arthroderma otae (strain ATCC MYA-4605 / CBS 113480) (Microsporum canis).